Here is an 819-residue protein sequence, read N- to C-terminus: Cadherin-24 (819 aa).

Positions 1–19 (MWGLVRLLLAWLGGWGCMG) are cleaved as a signal peptide. Residues 21–44 (LAAPARAWAGSREHPGPALLRTRR) constitute a propeptide that is removed on maturation. Over 45-641 (SWVWNQFFVI…LSAAGLSTGA (597 aa)) the chain is Extracellular. Cadherin domains lie at 46–150 (WVWN…PPIF), 151–259 (PLGP…PPKF), 260–374 (PQSL…PPAF), 375–517 (TQAA…APQL), and 517–630 (LAEP…WPEA). N-linked (GlcNAc...) asparagine glycans are attached at residues N446, N548, and N563. A helical membrane pass occupies residues 642–662 (LLAIITCVGALLALVVLFVAL). Residues 663-819 (RRQKQEALMV…LYGAKEPPAP (157 aa)) are Cytoplasmic-facing. A disordered region spans residues 768 to 800 (YEGRGSSCGSLSSLGSGSEAGGAPGPAEPLDDW). The span at 771-784 (RGSSCGSLSSLGSG) shows a compositional bias: low complexity.

As to quaternary structure, associates with alpha-, beta- and delta-catenins.

It is found in the cell membrane. Functionally, cadherins are calcium-dependent cell adhesion proteins. They preferentially interact with themselves in a homophilic manner in connecting cells; cadherins may thus contribute to the sorting of heterogeneous cell types. Cadherin-24 mediate strong cell-cell adhesion. The protein is Cadherin-24 (CDH24) of Homo sapiens (Human).